The chain runs to 416 residues: Phosphoribosylamine--glycine ligase (416 aa).

Residues Lys-105–Gln-310 form the ATP-grasp domain. Ile-131–Ser-192 is an ATP binding site. Residues Glu-281 and Asn-283 each contribute to the Mg(2+) site.

This sequence belongs to the GARS family. Mg(2+) is required as a cofactor. Mn(2+) serves as cofactor.

The catalysed reaction is 5-phospho-beta-D-ribosylamine + glycine + ATP = N(1)-(5-phospho-beta-D-ribosyl)glycinamide + ADP + phosphate + H(+). It functions in the pathway purine metabolism; IMP biosynthesis via de novo pathway; N(1)-(5-phospho-D-ribosyl)glycinamide from 5-phospho-alpha-D-ribose 1-diphosphate: step 2/2. This is Phosphoribosylamine--glycine ligase from Campylobacter jejuni subsp. jejuni serotype O:2 (strain ATCC 700819 / NCTC 11168).